Consider the following 512-residue polypeptide: Maturase K (512 aa).

Belongs to the intron maturase 2 family. MatK subfamily.

The protein resides in the plastid. Its subcellular location is the chloroplast. In terms of biological role, usually encoded in the trnK tRNA gene intron. Probably assists in splicing its own and other chloroplast group II introns. This is Maturase K from Oenothera argillicola (Appalachian evening primrose).